We begin with the raw amino-acid sequence, 274 residues long: MSGMHGASREALAAARERLDALTDSTSVDAGSLADELAAVTALLHREVSLRRVLTDPAQSGEAKAELAQRLLGTQVSGTAVDLVAGTVRSRWSQSRDLVDALEQLANIADLTAAQKRGRLDNVEDELFRFGRIISSNTELRAALTSRSATTAAKSELLAGLLGSRAERTTERLVTRLVTAPRGRSLESGLESLSKLAADRRDRMVAVVTSAVPLSDTQKQRLGAALAKVYGRPMHLNLDVDPEVLGGIRVQVGDEVINGSIADRLEDAGRRLAS.

It belongs to the ATPase delta chain family. In terms of assembly, F-type ATPases have 2 components, F(1) - the catalytic core - and F(0) - the membrane proton channel. F(1) has five subunits: alpha(3), beta(3), gamma(1), delta(1), epsilon(1). F(0) has three main subunits: a(1), b(2) and c(10-14). The alpha and beta chains form an alternating ring which encloses part of the gamma chain. F(1) is attached to F(0) by a central stalk formed by the gamma and epsilon chains, while a peripheral stalk is formed by the delta and b chains.

It is found in the cell membrane. In terms of biological role, f(1)F(0) ATP synthase produces ATP from ADP in the presence of a proton or sodium gradient. F-type ATPases consist of two structural domains, F(1) containing the extramembraneous catalytic core and F(0) containing the membrane proton channel, linked together by a central stalk and a peripheral stalk. During catalysis, ATP synthesis in the catalytic domain of F(1) is coupled via a rotary mechanism of the central stalk subunits to proton translocation. Its function is as follows. This protein is part of the stalk that links CF(0) to CF(1). It either transmits conformational changes from CF(0) to CF(1) or is implicated in proton conduction. This is ATP synthase subunit delta from Streptomyces coelicolor (strain ATCC BAA-471 / A3(2) / M145).